The chain runs to 362 residues: Aminomethyltransferase (362 aa).

It belongs to the GcvT family. In terms of assembly, the glycine cleavage system is composed of four proteins: P, T, L and H.

It carries out the reaction N(6)-[(R)-S(8)-aminomethyldihydrolipoyl]-L-lysyl-[protein] + (6S)-5,6,7,8-tetrahydrofolate = N(6)-[(R)-dihydrolipoyl]-L-lysyl-[protein] + (6R)-5,10-methylene-5,6,7,8-tetrahydrofolate + NH4(+). Functionally, the glycine cleavage system catalyzes the degradation of glycine. The protein is Aminomethyltransferase of Bacillus subtilis (strain 168).